A 734-amino-acid chain; its full sequence is Photosystem I P700 chlorophyll a apoprotein A2 (734 aa).

A run of 8 helical transmembrane segments spans residues 46–69 (IFAS…FHVA), 135–158 (LYTG…LHLQ), 175–199 (LNHH…HVAI), 273–291 (MAHH…GHMY), 330–353 (LHFQ…QHMY), 369–395 (AALY…IFFI), 417–439 (AIIS…LYVH), and 517–535 (FLVH…LILV). Positions 559 and 568 each coordinate [4Fe-4S] cluster. 2 helical membrane passes run 575 to 596 (AFYL…YWHW) and 643 to 665 (LSVW…MFLI). Positions 654, 662, and 670 each coordinate chlorophyll a. Position 671 (W671) interacts with phylloquinone. The chain crosses the membrane as a helical span at residues 707–727 (LVGLAHFSVGYIFTYAAFLIA).

The protein belongs to the PsaA/PsaB family. In terms of assembly, the PsaA/B heterodimer binds the P700 chlorophyll special pair and subsequent electron acceptors. PSI consists of a core antenna complex that captures photons, and an electron transfer chain that converts photonic excitation into a charge separation. The eukaryotic PSI reaction center is composed of at least 11 subunits. P700 is a chlorophyll a/chlorophyll a' dimer, A0 is one or more chlorophyll a, A1 is one or both phylloquinones and FX is a shared 4Fe-4S iron-sulfur center. is required as a cofactor.

The protein localises to the plastid. It is found in the chloroplast thylakoid membrane. The catalysed reaction is reduced [plastocyanin] + hnu + oxidized [2Fe-2S]-[ferredoxin] = oxidized [plastocyanin] + reduced [2Fe-2S]-[ferredoxin]. PsaA and PsaB bind P700, the primary electron donor of photosystem I (PSI), as well as the electron acceptors A0, A1 and FX. PSI is a plastocyanin-ferredoxin oxidoreductase, converting photonic excitation into a charge separation, which transfers an electron from the donor P700 chlorophyll pair to the spectroscopically characterized acceptors A0, A1, FX, FA and FB in turn. Oxidized P700 is reduced on the lumenal side of the thylakoid membrane by plastocyanin. The chain is Photosystem I P700 chlorophyll a apoprotein A2 from Lactuca sativa (Garden lettuce).